We begin with the raw amino-acid sequence, 650 residues long: Fructose-1,6-bisphosphatase class 3 (650 aa).

The protein belongs to the FBPase class 3 family. Requires Mn(2+) as cofactor.

The enzyme catalyses beta-D-fructose 1,6-bisphosphate + H2O = beta-D-fructose 6-phosphate + phosphate. The protein operates within carbohydrate biosynthesis; gluconeogenesis. The polypeptide is Fructose-1,6-bisphosphatase class 3 (Staphylococcus saprophyticus subsp. saprophyticus (strain ATCC 15305 / DSM 20229 / NCIMB 8711 / NCTC 7292 / S-41)).